Consider the following 126-residue polypeptide: Probable flagellum biosynthesis repressor protein FlbT (126 aa).

The protein belongs to the FlbT family.

In terms of biological role, has a post-transcriptional repressor function in flagellum biogenesis. Associates with the 5'-UTR of fljK mRNA and promotes its degradation. This Rhodopseudomonas palustris (strain ATCC BAA-98 / CGA009) protein is Probable flagellum biosynthesis repressor protein FlbT.